The primary structure comprises 508 residues: DNA-directed RNA polymerase subunit Rpo1C (508 aa).

The interval 1 to 123 (MASLLWRDTS…EIKEKYGENL (123 aa)) is unknown. Residues 124 to 508 (SEDVQKVLDD…IYKGYPKTKK (385 aa)) are DNA-directed RNA polymerase subunit Rpo1C.

It belongs to the RNA polymerase beta' chain family. As to quaternary structure, part of the RNA polymerase complex.

The protein resides in the cytoplasm. It catalyses the reaction RNA(n) + a ribonucleoside 5'-triphosphate = RNA(n+1) + diphosphate. DNA-dependent RNA polymerase (RNAP) catalyzes the transcription of DNA into RNA using the four ribonucleoside triphosphates as substrates. Forms part of the jaw domain. The sequence is that of DNA-directed RNA polymerase subunit Rpo1C from Thermoplasma acidophilum (strain ATCC 25905 / DSM 1728 / JCM 9062 / NBRC 15155 / AMRC-C165).